Reading from the N-terminus, the 285-residue chain is MSELTEAEKRRLLRERRQKKFSNGGASSRLNKITGQASSHLNAESPLDAPSAAKTTPPASVHSATPDIKEDSNVAPQLDLLKQLAAMQGQGTGKSTPQDSSTPDLLSLLSSMNTGMPSAEGTPSFGQAAPAAPINQAALDYHDYLLNRLKAWTILVKWVFFLLPYLYLITRPNSSVWPAYAFTQSAWFAPLRNPSNFTRIFATFEFLSISIYYQLLKNVEHKSKIKNLQDTNKLVKLVSLVPEGVIPVANLKGKLITLLQYWDLLSMLITDISFVLIVLGLLTYL.

The span at 1 to 10 (MSELTEAEKR) shows a compositional bias: basic and acidic residues. Disordered stretches follow at residues 1–72 (MSEL…KEDS) and 87–106 (MQGQ…PDLL). Ser-2 is modified (N-acetylserine). Residues 2 to 148 (SELTEAEKRR…LDYHDYLLNR (147 aa)) are Cytoplasmic-facing. Positions 11-20 (RLLRERRQKK) are enriched in basic residues. Over residues 24–42 (GGASSRLNKITGQASSHLN) the composition is skewed to polar residues. Ser-45 is subject to Phosphoserine. Residues 49 to 60 (APSAAKTTPPAS) are compositionally biased toward low complexity. Over residues 93 to 104 (GKSTPQDSSTPD) the composition is skewed to polar residues. Residues 149-169 (LKAWTILVKWVFFLLPYLYLI) traverse the membrane as a helical segment. Residues 170–196 (TRPNSSVWPAYAFTQSAWFAPLRNPSN) are Lumenal-facing. N-linked (GlcNAc...) asparagine glycosylation is found at Asn-173 and Asn-196. The helical transmembrane segment at 197–216 (FTRIFATFEFLSISIYYQLL) threads the bilayer. Residues 217–263 (KNVEHKSKIKNLQDTNKLVKLVSLVPEGVIPVANLKGKLITLLQYWD) are Cytoplasmic-facing. The chain crosses the membrane as a helical span at residues 264-284 (LLSMLITDISFVLIVLGLLTY). A topological domain (lumenal) is located at residue Leu-285.

The protein belongs to the GET2 family. As to quaternary structure, component of the Golgi to ER traffic (GET) complex, which is composed of GET1, GET2 and GET3. Within the complex, GET1 and GET2 form a heterotetramer which is stabilized by phosphatidylinositol binding and which binds to the GET3 homodimer.

It localises to the endoplasmic reticulum membrane. The protein localises to the golgi apparatus membrane. In terms of biological role, required for the post-translational delivery of tail-anchored (TA) proteins to the endoplasmic reticulum. Together with GET1, acts as a membrane receptor for soluble GET3, which recognizes and selectively binds the transmembrane domain of TA proteins in the cytosol. The GET complex cooperates with the HDEL receptor ERD2 to mediate the ATP-dependent retrieval of resident ER proteins that contain a C-terminal H-D-E-L retention signal from the Golgi to the ER. Involved in DNA replication and DNA damage response and also in cell wall function. The chain is Golgi to ER traffic protein 2 from Saccharomyces cerevisiae (strain RM11-1a) (Baker's yeast).